Reading from the N-terminus, the 74-residue chain is Defensin (74 aa).

Residues 1–22 form the signal peptide; sequence MRGLCICLVFLLVCGLVSATAA. The propeptide occupies 23 to 36; sequence APAESEVAHLRVRR. Disulfide bonds link Cys40–Cys61, Cys47–Cys69, and Cys51–Cys71.

In terms of tissue distribution, hemolymph.

It localises to the secreted. Functionally, antibacterial activity against Gram-positive and Gram-negative bacteria. This Dermacentor variabilis (American dog tick) protein is Defensin (VSNA1).